The primary structure comprises 312 residues: Malate dehydrogenase (312 aa).

NAD(+) contacts are provided by residues 12–17 (GSGFTG) and Asp-36. Arg-87 and Arg-93 together coordinate substrate. NAD(+) contacts are provided by residues Asn-100 and 123–125 (LTN). Position 125 (Asn-125) interacts with substrate. Ser-149 carries the phosphoserine modification. Arg-156 serves as a coordination point for substrate. Catalysis depends on His-180, which acts as the Proton acceptor.

It belongs to the LDH/MDH superfamily. MDH type 3 family.

The enzyme catalyses (S)-malate + NAD(+) = oxaloacetate + NADH + H(+). In terms of biological role, catalyzes the reversible oxidation of malate to oxaloacetate. This is Malate dehydrogenase from Oceanobacillus iheyensis (strain DSM 14371 / CIP 107618 / JCM 11309 / KCTC 3954 / HTE831).